Here is a 245-residue protein sequence, read N- to C-terminus: Endogenous retrovirus group K member 5 Env polyprotein (245 aa).

Residues 1–245 (MVTPVTWMDN…TLEFGLEIKL (245 aa)) form a truncated surface protein region.

Belongs to the beta type-B retroviral envelope protein family. HERV class-II K(HML-2) env subfamily. As to expression, expressed in lung, placenta, testis, peripheral blood lymphocytes, and teratocarcinoma cell lines.

Its subcellular location is the virion. Functionally, retroviral envelope proteins mediate receptor recognition and membrane fusion during early infection. Endogenous envelope proteins may have kept, lost or modified their original function during evolution. The sequence is that of Endogenous retrovirus group K member 5 Env polyprotein (ERVK-5) from Homo sapiens (Human).